The sequence spans 435 residues: Xylose isomerase (435 aa).

Residues Asp306 and Asp308 each coordinate Mg(2+).

Belongs to the xylose isomerase family. Homotetramer. It depends on Mg(2+) as a cofactor.

The protein resides in the cytoplasm. The catalysed reaction is alpha-D-xylose = alpha-D-xylulofuranose. The polypeptide is Xylose isomerase (Allorhizobium ampelinum (strain ATCC BAA-846 / DSM 112012 / S4) (Agrobacterium vitis (strain S4))).